Consider the following 755-residue polypeptide: 1,4-alpha-glucan branching enzyme GlgB (755 aa).

Aspartate 435 acts as the Nucleophile in catalysis. The Proton donor role is filled by glutamate 488.

This sequence belongs to the glycosyl hydrolase 13 family. GlgB subfamily. Monomer.

It carries out the reaction Transfers a segment of a (1-&gt;4)-alpha-D-glucan chain to a primary hydroxy group in a similar glucan chain.. The protein operates within glycan biosynthesis; glycogen biosynthesis. Functionally, catalyzes the formation of the alpha-1,6-glucosidic linkages in glycogen by scission of a 1,4-alpha-linked oligosaccharide from growing alpha-1,4-glucan chains and the subsequent attachment of the oligosaccharide to the alpha-1,6 position. This is 1,4-alpha-glucan branching enzyme GlgB from Vibrio parahaemolyticus serotype O3:K6 (strain RIMD 2210633).